The chain runs to 449 residues: Glucose-6-phosphate isomerase (449 aa).

The Proton donor role is filled by Glu291. Active-site residues include His312 and Lys426.

This sequence belongs to the GPI family.

Its subcellular location is the cytoplasm. The enzyme catalyses alpha-D-glucose 6-phosphate = beta-D-fructose 6-phosphate. It functions in the pathway carbohydrate biosynthesis; gluconeogenesis. The protein operates within carbohydrate degradation; glycolysis; D-glyceraldehyde 3-phosphate and glycerone phosphate from D-glucose: step 2/4. Catalyzes the reversible isomerization of glucose-6-phosphate to fructose-6-phosphate. The chain is Glucose-6-phosphate isomerase from Streptococcus mutans serotype c (strain ATCC 700610 / UA159).